Reading from the N-terminus, the 174-residue chain is Probable inosine/xanthosine triphosphatase (174 aa).

Residue Asp63 participates in Mg(2+) binding.

This sequence belongs to the YjjX NTPase family. As to quaternary structure, homodimer. Mg(2+) is required as a cofactor. Mn(2+) serves as cofactor.

It carries out the reaction XTP + H2O = XDP + phosphate + H(+). The enzyme catalyses ITP + H2O = IDP + phosphate + H(+). Functionally, phosphatase that hydrolyzes non-canonical purine nucleotides such as XTP and ITP to their respective diphosphate derivatives. Probably excludes non-canonical purines from DNA/RNA precursor pool, thus preventing their incorporation into DNA/RNA and avoiding chromosomal lesions. This Methanocella arvoryzae (strain DSM 22066 / NBRC 105507 / MRE50) protein is Probable inosine/xanthosine triphosphatase.